A 316-amino-acid polypeptide reads, in one-letter code: MSDISKASLPKAIFLMGPTASGKTALAIELRKILPVELISVDSALIYKGMDIGTAKPNAEELLAAPHRLLDIRDPSQAYSAADFRRDALAEMADITAAGRIPLLVGGTMLYFKALLEGLSPLPSADPEVRARIEQQAAEQGWESLHRQLQEVDPVAAARIHPNDPQRLSRALEVFFISGKTLTELTQTSGDALPYQVHQFAIAPASRELLHQRIEQRFHQMLASGFEAEVRALFARGDLHTDLPSIRCVGYRQMWSYLEGEISYDEMVYRGVCATRQLAKRQITWLRGWEGVHWLDSEKPEQARDEVLQVVGAIAG.

ATP is bound at residue 17–24 (GPTASGKT). 19–24 (TASGKT) is a binding site for substrate. Interaction with substrate tRNA stretches follow at residues 42–45 (DSAL), 166–170 (QRLSR), 247–252 (RCVGYR), and 280–287 (KRQITWLR).

It belongs to the IPP transferase family. As to quaternary structure, monomer. Mg(2+) is required as a cofactor.

It catalyses the reaction adenosine(37) in tRNA + dimethylallyl diphosphate = N(6)-dimethylallyladenosine(37) in tRNA + diphosphate. Its function is as follows. Catalyzes the transfer of a dimethylallyl group onto the adenine at position 37 in tRNAs that read codons beginning with uridine, leading to the formation of N6-(dimethylallyl)adenosine (i(6)A). This is tRNA dimethylallyltransferase from Shigella flexneri serotype 5b (strain 8401).